We begin with the raw amino-acid sequence, 317 residues long: Transaldolase (317 aa).

The Schiff-base intermediate with substrate role is filled by Lys132.

It belongs to the transaldolase family. Type 1 subfamily. As to quaternary structure, homodimer.

It is found in the cytoplasm. The enzyme catalyses D-sedoheptulose 7-phosphate + D-glyceraldehyde 3-phosphate = D-erythrose 4-phosphate + beta-D-fructose 6-phosphate. It functions in the pathway carbohydrate degradation; pentose phosphate pathway; D-glyceraldehyde 3-phosphate and beta-D-fructose 6-phosphate from D-ribose 5-phosphate and D-xylulose 5-phosphate (non-oxidative stage): step 2/3. Functionally, transaldolase is important for the balance of metabolites in the pentose-phosphate pathway. The polypeptide is Transaldolase (Haemophilus influenzae (strain PittGG)).